Here is a 260-residue protein sequence, read N- to C-terminus: uncharacterized protein (260 aa).

This is an uncharacterized protein from Aquifex aeolicus (strain VF5).